Consider the following 234-residue polypeptide: Biotin transport ATP-binding protein BioM (234 aa).

Positions 1–230 (MQAIDIGHVT…YIAAMQALAR (230 aa)) constitute an ABC transporter domain. Position 35–42 (35–42 (GRNGAGKS)) interacts with ATP.

Belongs to the ABC transporter superfamily. In terms of assembly, part of a biotin transporter holocomplex composed of BioM, BioN and BioY. BioMN complexes can be readily purified, but not BioMY complexes. Only the BioMNY complex has ATPase activity.

The protein resides in the cell inner membrane. Required for biotin uptake under very low (pM) biotin concentrations but not under higher (nM) concentrations. The sequence is that of Biotin transport ATP-binding protein BioM (bioM) from Rhodobacter capsulatus (strain ATCC BAA-309 / NBRC 16581 / SB1003).